Here is a 323-residue protein sequence, read N- to C-terminus: Small ribosomal subunit protein uS9m (323 aa).

The disordered stretch occupies residues 298–323; the sequence is TRDARKVERKKPGKVKARKSPTWVKR. Residues 304–323 are compositionally biased toward basic residues; the sequence is VERKKPGKVKARKSPTWVKR.

It belongs to the universal ribosomal protein uS9 family.

Its subcellular location is the mitochondrion. The polypeptide is Small ribosomal subunit protein uS9m (MRPS9) (Debaryomyces hansenii (strain ATCC 36239 / CBS 767 / BCRC 21394 / JCM 1990 / NBRC 0083 / IGC 2968) (Yeast)).